Here is a 438-residue protein sequence, read N- to C-terminus: MDTDILQKQDAEVFASIANETKRQTETLELIASENFTSRAVMQACGSVMTNKYAEGYPGKRYYGGCEFVDVAENLARDRAKKLFGCEYVNVQPHSGSSANMAVLFSVLKPGDKIMGLDLSHGGHLTHGSSVNFSGQMFEAHSYGVDRETGCIDMNKVEEMAMQVRPKLIIGGASAYSQGFDFKAFRAIADKVGALLMADIAHPAGLIAAGLLPNPLQHCHFVTTTTHKTLRGPRGGMIMMGSDFENPLGITIKTKTGSRVKMMSEVMDAEVMPGIQGGPLMHIIAGKAVAFGEALQPAFKEYAAQVMKNASTMASRFMELGYTIVSGGTKNHLMLLDLRNKNVTGKEAENLLHEAGITVNKNMVPFDDKSPFVTSGIRIGTPAMTTRGMKEAESRRIAELIDQVITSASKPDISAICEAVREEIKTICHNNPIEGYSV.

(6S)-5,6,7,8-tetrahydrofolate-binding positions include leucine 119 and 123-125; that span reads GHL. At lysine 228 the chain carries N6-(pyridoxal phosphate)lysine. 370–372 lines the (6S)-5,6,7,8-tetrahydrofolate pocket; sequence SPF.

The protein belongs to the SHMT family. Homodimer. Pyridoxal 5'-phosphate is required as a cofactor.

The protein localises to the cytoplasm. The catalysed reaction is (6R)-5,10-methylene-5,6,7,8-tetrahydrofolate + glycine + H2O = (6S)-5,6,7,8-tetrahydrofolate + L-serine. Its pathway is one-carbon metabolism; tetrahydrofolate interconversion. It functions in the pathway amino-acid biosynthesis; glycine biosynthesis; glycine from L-serine: step 1/1. In terms of biological role, catalyzes the reversible interconversion of serine and glycine with tetrahydrofolate (THF) serving as the one-carbon carrier. This reaction serves as the major source of one-carbon groups required for the biosynthesis of purines, thymidylate, methionine, and other important biomolecules. Also exhibits THF-independent aldolase activity toward beta-hydroxyamino acids, producing glycine and aldehydes, via a retro-aldol mechanism. This chain is Serine hydroxymethyltransferase, found in Chlorobium chlorochromatii (strain CaD3).